The primary structure comprises 256 residues: MPASMFSIDNILAARPRCKDAVLPVAPSAAAPVVFPALHGDSLYGAGGGTSSDYGAFYPRPVAPGGAGLPAAVGSSRLGYNSYFYGQLHVQAAPVGPACCGAVPPLGAQQCSCVPTPPGYEGPGSVLVSPVPHQMLPYMNVGTLSRTELQLLNQLHCRRKRRHRTIFTDEQLEALENLFQETKYPDVGTREQLARKVHLREEKVEVWFKNRRAKWRRQKRSSSEESENAEKWNKTSSKASPEKREEEGKSDLDSDS.

Positions Lys-160–Lys-219 form a DNA-binding region, homeobox. Residues Ala-213–Ser-256 form a disordered region. Basic and acidic residues predominate over residues Ser-240–Ser-256.

This sequence belongs to the paired homeobox family. Bicoid subfamily. As to expression, in early gastrulation, expressed in the dorsal lip. In later stages of development found in head, limbs and body wall. In the embryo, expressed in the postotic cranial neural crest cells, the frontonasal prominence, the first branchial arch and cleft, and specific regions of large joints.

The protein resides in the nucleus. Regulates chordin (CHRD). May play a role in spatial programing within discrete embryonic fields or lineage compartments during organogenesis. In concert with NKX3-2, plays a role in defining the structural components of the middle ear; required for the development of the entire tympanic ring. Goosecoid-expressing regions of the gastrulating mouse egg cylinder have organizer-like activity when transplanted into Xenopus embryos. Probably involved in the regulatory networks that define neural crest cell fate specification and determine mesoderm cell lineages in mammals. The polypeptide is Homeobox protein goosecoid (Gsc) (Mus musculus (Mouse)).